The chain runs to 313 residues: tRNA dimethylallyltransferase (313 aa).

10–17 (GPTAVGKS) contacts ATP. A substrate-binding site is contributed by 12–17 (TAVGKS). The interaction with substrate tRNA stretch occupies residues 35 to 38 (DSTQ).

This sequence belongs to the IPP transferase family. In terms of assembly, monomer. The cofactor is Mg(2+).

The catalysed reaction is adenosine(37) in tRNA + dimethylallyl diphosphate = N(6)-dimethylallyladenosine(37) in tRNA + diphosphate. In terms of biological role, catalyzes the transfer of a dimethylallyl group onto the adenine at position 37 in tRNAs that read codons beginning with uridine, leading to the formation of N6-(dimethylallyl)adenosine (i(6)A). The polypeptide is tRNA dimethylallyltransferase (Oceanobacillus iheyensis (strain DSM 14371 / CIP 107618 / JCM 11309 / KCTC 3954 / HTE831)).